A 594-amino-acid chain; its full sequence is Putative aldehyde oxidase Art an 7 (594 aa).

The signal sequence occupies residues 1 to 23 (MASSIKTVILFLLPLLLAYSVLA). A disordered region spans residues 28 to 56 (TDGGDKPGPEIDDGGGDKPVPGNNDGASD).

Post-translationally, the N-terminus is blocked. In terms of processing, glycosylated. In terms of tissue distribution, expressed in pollen (at protein level).

The protein localises to the cytoplasm. It catalyses the reaction an aldehyde + O2 + H2O = a carboxylate + H2O2 + H(+). Catalyzes the oxidation of aldehydes to the corresponding carboxylate by coupling the reaction to the reduction of dioxygen to hydrogen peroxide. Substrates include glyoxal and other aldehydes. Does not have enzymatic activity on D-galactose. This chain is Putative aldehyde oxidase Art an 7, found in Artemisia annua (Sweet wormwood).